The primary structure comprises 874 residues: Speckle targeted PIP5K1A-regulated poly(A) polymerase (874 aa).

The Matrin-type zinc finger occupies 16-46 (FRCCLCHVTTANRPSLDAHLGGRKHRHLVEL). The RRM domain maps to 56-128 (RSVFVSGFPR…HRLRVRPREQ (73 aa)). A disordered region spans residues 113–146 (QHSLGGHRLRVRPREQKEFQSPASKSPKGAAPDS). ATP is bound at residue Ser205. Mg(2+)-binding residues include Asp216 and Asp218. UTP-binding residues include Asp216 and Asp218. Residues 252-334 (QALACTPASP…ELAETPKEEK (83 aa)) form a disordered region. Residues 259–269 (ASPPDSQPPAS) show a composition bias toward pro residues. A compositionally biased stretch (polar residues) spans 280–291 (TPSSSLAPQTPD). Asn392 contacts ATP. UTP contacts are provided by Asn392, Arg414, Tyr432, and His549. The PAP-associated domain occupies 491-549 (LSSLLAQFFSCVSCWDLRGSLLSLREGQALPVAGGLPSNLWEGLRLGPLNLQDPFDLSH). A KA1; binds the bulging loops of U6 snRNA but is dispensable for terminal uridylyltransferase activity region spans residues 598 to 874 (SSPSSLLSAT…FLPQAIRHLK (277 aa)). 2 disordered regions span residues 638 to 662 (ATKR…KRLK) and 705 to 761 (MQSP…ASLP). Ser750 is modified (phosphoserine).

It belongs to the DNA polymerase type-B-like family. As to quaternary structure, associates with the cleavage and polyadenylation specificity factor (CPSF) complex. Interacts with CPSF1 and CPSF3; the interaction is direct. Interacts with PIP5K1A. It depends on Mg(2+) as a cofactor. The cofactor is Mn(2+). Phosphorylated by CK1 in the proline-rich (Pro-rich) region. Widely expressed.

It is found in the nucleus. Its subcellular location is the nucleolus. The protein resides in the nucleus speckle. It catalyses the reaction RNA(n) + UTP = RNA(n)-3'-uridine ribonucleotide + diphosphate. It carries out the reaction RNA(n) + ATP = RNA(n)-3'-adenine ribonucleotide + diphosphate. Adenylyltransferase activity is specifically phosphatidylinositol 4,5-bisphosphate (PtdIns(4,5)P2). In terms of biological role, poly(A) polymerase that creates the 3'-poly(A) tail of specific pre-mRNAs. Localizes to nuclear speckles together with PIP5K1A and mediates polyadenylation of a select set of mRNAs, such as HMOX1. In addition to polyadenylation, it is also required for the 3'-end cleavage of pre-mRNAs: binds to the 3'UTR of targeted pre-mRNAs and promotes the recruitment and assembly of the CPSF complex on the 3'UTR of pre-mRNAs. In addition to adenylyltransferase activity, also has uridylyltransferase activity. However, the ATP ratio is higher than UTP in cells, suggesting that it functions primarily as a poly(A) polymerase. Acts as a specific terminal uridylyltransferase for U6 snRNA in vitro: responsible for a controlled elongation reaction that results in the restoration of the four 3'-terminal UMP-residues found in newly transcribed U6 snRNA. Not involved in replication-dependent histone mRNA degradation. This Homo sapiens (Human) protein is Speckle targeted PIP5K1A-regulated poly(A) polymerase (TUT1).